A 705-amino-acid polypeptide reads, in one-letter code: MDRRGAPVKQDSAKVEQRMEELRTLLEYHGHRYYVMDEPEISDAEYDALFRELVRLEEEHPEHIHPGSPTHKVGGQILDGLKPREHSLRMYSLDNAFGIEEFREFVERVVRLEPDAPLEFWVDPKMDGLAMELVYENGVFLLAVTRGDGSMGEDVTHTMRTVRNVRMRLNPEIEAPVRLEVRGEVIITRADFEALNARQQQKGGKLFANPRNAAAGSVRQLDSSVAAARPLRFMAYGVGQVVWADGRQRWRTQYDIMRGLQELGFAVPSQGRLCAAPADVEAAFTELSAARHELPFEIDGVVAKLNDLDLQEALGFTARAPRWAIALKFPAHQARTRLKDIRIQVGRTGVMTPVAELEPVTVGGVTVSSATLHNEDEIRAKGLMLGDVVIVQRAGDVIPEVVRAVPEERTGAEREYVFPAVCPVCGSAAVRGEGEAAWRCTNMQCPAVRKQAIIHFVSKAGLDIDGVGRKWIEQLVDSGRVVSPADLFRITREDLLGMERMGEKLASNFIEAFDSARHESTLQRFICALGIRHVGEQTARTLAARFGNMDELMRADQETLQSLRDIGGEVAGSIRAFFANGQNRELLQQFKNLGLWPEEQQPAGDSTPVTPLAGKKILFTGSLVRMTRSEAKAMAEKAGAAVMSGVSARLDILVAGDKPGSKLEKARSLGITVLTEDEFIRQASESEEISGQAADDYENSLLRVQ.

Residues 43 to 47 (DAEYD), 92 to 93 (SL), and D123 each bind NAD(+). K125 acts as the N6-AMP-lysine intermediate in catalysis. Residues R146, E184, K304, and K328 each coordinate NAD(+). Residues C422, C425, C440, and C445 each coordinate Zn(2+). The BRCT domain maps to 607–696 (TPVTPLAGKK…EEISGQAADD (90 aa)). The disordered stretch occupies residues 684–705 (SESEEISGQAADDYENSLLRVQ).

The protein belongs to the NAD-dependent DNA ligase family. LigA subfamily. It depends on Mg(2+) as a cofactor. Mn(2+) is required as a cofactor.

The enzyme catalyses NAD(+) + (deoxyribonucleotide)n-3'-hydroxyl + 5'-phospho-(deoxyribonucleotide)m = (deoxyribonucleotide)n+m + AMP + beta-nicotinamide D-nucleotide.. Functionally, DNA ligase that catalyzes the formation of phosphodiester linkages between 5'-phosphoryl and 3'-hydroxyl groups in double-stranded DNA using NAD as a coenzyme and as the energy source for the reaction. It is essential for DNA replication and repair of damaged DNA. This Oleidesulfovibrio alaskensis (strain ATCC BAA-1058 / DSM 17464 / G20) (Desulfovibrio alaskensis) protein is DNA ligase.